Reading from the N-terminus, the 692-residue chain is Methionine--tRNA ligase (692 aa).

The 'HIGH' region motif lies at 12–22 (PYANGPLHLGH). Cys143, Cys146, Cys156, and Cys159 together coordinate Zn(2+). Residues 330–334 (KMSKS) carry the 'KMSKS' region motif. ATP is bound at residue Lys333. Residues 554-563 (AAAAPAAKPA) show a composition bias toward low complexity. Residues 554 to 575 (AAAAPAAKPAAPAPAPAPAKDE) are disordered. Positions 589–692 (DFAKLDLRIG…SGAQPGMPVR (104 aa)) constitute a tRNA-binding domain.

The protein belongs to the class-I aminoacyl-tRNA synthetase family. MetG type 1 subfamily. Homodimer. It depends on Zn(2+) as a cofactor.

The protein localises to the cytoplasm. The enzyme catalyses tRNA(Met) + L-methionine + ATP = L-methionyl-tRNA(Met) + AMP + diphosphate. Is required not only for elongation of protein synthesis but also for the initiation of all mRNA translation through initiator tRNA(fMet) aminoacylation. The sequence is that of Methionine--tRNA ligase from Stenotrophomonas maltophilia (strain K279a).